The chain runs to 119 residues: Holo-[acyl-carrier-protein] synthase (119 aa).

Mg(2+)-binding residues include Asp-8 and Glu-58.

The protein belongs to the P-Pant transferase superfamily. AcpS family. The cofactor is Mg(2+).

The protein resides in the cytoplasm. The enzyme catalyses apo-[ACP] + CoA = holo-[ACP] + adenosine 3',5'-bisphosphate + H(+). In terms of biological role, transfers the 4'-phosphopantetheine moiety from coenzyme A to a Ser of acyl-carrier-protein. This Lactobacillus johnsonii (strain CNCM I-12250 / La1 / NCC 533) protein is Holo-[acyl-carrier-protein] synthase.